A 173-amino-acid chain; its full sequence is Ribulose bisphosphate carboxylase small subunit, chloroplastic 3 (173 aa).

The N-terminal 49 residues, 1-49, are a transit peptide targeting the chloroplast; sequence MASIPATVATVAQANMVAPFTGLKSNAAFPVTKKVNDFSTLPSNGGRVQ.

This sequence belongs to the RuBisCO small chain family. As to quaternary structure, heterohexadecamer of 8 large and 8 small subunits.

The protein localises to the plastid. The protein resides in the chloroplast. Functionally, ruBisCO catalyzes two reactions: the carboxylation of D-ribulose 1,5-bisphosphate, the primary event in carbon dioxide fixation, as well as the oxidative fragmentation of the pentose substrate. Both reactions occur simultaneously and in competition at the same active site. Although the small subunit is not catalytic it is essential for maximal activity. The sequence is that of Ribulose bisphosphate carboxylase small subunit, chloroplastic 3 from Flaveria pringlei.